Consider the following 353-residue polypeptide: GTPase Obg (353 aa).

Residues 1–159 enclose the Obg domain; that stretch reads MKFLDEAKVY…RWIWLRLKLI (159 aa). The region spanning 160–327 is the OBG-type G domain; sequence ADAGLVGLPN…ALRALVAVIG (168 aa). GTP is bound by residues 166–173, 191–195, 212–215, 279–282, and 308–310; these read GLPNAGKS, FTTLH, DIPG, NKID, and SGV. The Mg(2+) site is built by Ser-173 and Thr-193.

Belongs to the TRAFAC class OBG-HflX-like GTPase superfamily. OBG GTPase family. In terms of assembly, monomer. The cofactor is Mg(2+).

The protein localises to the cytoplasm. Its function is as follows. An essential GTPase which binds GTP, GDP and possibly (p)ppGpp with moderate affinity, with high nucleotide exchange rates and a fairly low GTP hydrolysis rate. Plays a role in control of the cell cycle, stress response, ribosome biogenesis and in those bacteria that undergo differentiation, in morphogenesis control. This Rhodopseudomonas palustris (strain ATCC BAA-98 / CGA009) protein is GTPase Obg.